The sequence spans 54 residues: Ovomucoid (54 aa).

Residues 4-54 (VDCSDYPRPDCTLEYMPLCGSDNKTYGNKCNFCNAVVDSNGTLTLSHFGKC) enclose the Kazal-like domain. 3 disulfide bridges follow: Cys-6–Cys-36, Cys-14–Cys-33, and Cys-22–Cys-54. A glycan (N-linked (GlcNAc...) asparagine) is linked at Asn-43.

It is found in the secreted. In Dendrocygna eytoni (Plumed whistling-duck), this protein is Ovomucoid.